The following is a 206-amino-acid chain: LexA repressor (206 aa).

Residues 28–48 (RAEIAKRLGFKSANAAEEHLK) constitute a DNA-binding region (H-T-H motif). Active-site for autocatalytic cleavage activity residues include Ser123 and Lys160.

The protein belongs to the peptidase S24 family. In terms of assembly, homodimer.

The enzyme catalyses Hydrolysis of Ala-|-Gly bond in repressor LexA.. Functionally, represses a number of genes involved in the response to DNA damage (SOS response), including recA and lexA. In the presence of single-stranded DNA, RecA interacts with LexA causing an autocatalytic cleavage which disrupts the DNA-binding part of LexA, leading to derepression of the SOS regulon and eventually DNA repair. This Shewanella sediminis (strain HAW-EB3) protein is LexA repressor.